Reading from the N-terminus, the 102-residue chain is MPVEQDGLTGGRGVPHPNSAAGQALSGKTGGSSVPHPNSAAGQALSGGMTGGSAVPHPNSAAGQELTNKNLEEKSVLEGGTQVKPWLKNQPDLANIREQNHQ.

Residues Met1–Gln102 form a disordered region.

This is an uncharacterized protein from Caenorhabditis elegans.